The primary structure comprises 249 residues: NAD kinase (249 aa).

D49 (proton acceptor) is an active-site residue. NAD(+) is bound by residues 49–50 (DG), R54, 115–116 (NE), K126, R143, D145, I153, 156–161 (TGYAFS), A180, and Q211.

This sequence belongs to the NAD kinase family. As to quaternary structure, homotetramer. It depends on a divalent metal cation as a cofactor.

It localises to the cytoplasm. It catalyses the reaction NAD(+) + ATP = ADP + NADP(+) + H(+). In terms of biological role, involved in the regulation of the intracellular balance between NAD(H) and NADP(H), and is a key enzyme in the biosynthesis of NADP. Catalyzes specifically the phosphorylation on 2'-hydroxyl of the adenosine moiety of NAD to yield NADP. In Archaeoglobus fulgidus (strain ATCC 49558 / DSM 4304 / JCM 9628 / NBRC 100126 / VC-16), this protein is NAD kinase.